Reading from the N-terminus, the 264-residue chain is Thymidylate synthase (264 aa).

Arg21 is a binding site for dUMP. His51 contacts (6R)-5,10-methylene-5,6,7,8-tetrahydrofolate. 126 to 127 lines the dUMP pocket; the sequence is RR. Cys146 acts as the Nucleophile in catalysis. Residues 166–169, Asn177, and 207–209 each bind dUMP; these read RSAD and HLY. Asp169 contributes to the (6R)-5,10-methylene-5,6,7,8-tetrahydrofolate binding site. Residue Ser263 participates in (6R)-5,10-methylene-5,6,7,8-tetrahydrofolate binding.

Belongs to the thymidylate synthase family. Bacterial-type ThyA subfamily. Homodimer.

It localises to the cytoplasm. It carries out the reaction dUMP + (6R)-5,10-methylene-5,6,7,8-tetrahydrofolate = 7,8-dihydrofolate + dTMP. It participates in pyrimidine metabolism; dTTP biosynthesis. Catalyzes the reductive methylation of 2'-deoxyuridine-5'-monophosphate (dUMP) to 2'-deoxythymidine-5'-monophosphate (dTMP) while utilizing 5,10-methylenetetrahydrofolate (mTHF) as the methyl donor and reductant in the reaction, yielding dihydrofolate (DHF) as a by-product. This enzymatic reaction provides an intracellular de novo source of dTMP, an essential precursor for DNA biosynthesis. The sequence is that of Thymidylate synthase from Shouchella clausii (strain KSM-K16) (Alkalihalobacillus clausii).